The chain runs to 375 residues: Growth/differentiation factor 8 (375 aa).

The first 18 residues, 1–18 (MQKLQISVYIYLFMLIVA), serve as a signal peptide directing secretion. Residues 19–266 (GPVDLNEKSE…VTDTPKRSRR (248 aa)) constitute a propeptide that is removed on maturation. Asn47 and Asn71 each carry an N-linked (GlcNAc...) asparagine glycan. Intrachain disulfides connect Cys272–Cys282, Cys281–Cys340, Cys309–Cys372, and Cys313–Cys374.

This sequence belongs to the TGF-beta family. Homodimer; disulfide-linked. Interacts with WFIKKN2, leading to inhibit its activity. Interacts with FSTL3. Synthesized as large precursor molecule that undergoes proteolytic cleavage to generate an N-terminal propeptide and a disulfide linked C-terminal dimer, which is the biologically active molecule. The circulating form consists of a latent complex of the C-terminal dimer and other proteins, including its propeptide, which maintain the C-terminal dimer in a latent, inactive state. Ligand activation requires additional cleavage of the prodomain by a tolloid-like metalloproteinase.

The protein resides in the secreted. Functionally, acts specifically as a negative regulator of skeletal muscle growth. The chain is Growth/differentiation factor 8 (MSTN) from Taurotragus derbianus (Giant eland).